The sequence spans 115 residues: Small ribosomal subunit protein bS6 (115 aa).

Belongs to the bacterial ribosomal protein bS6 family.

Its function is as follows. Binds together with bS18 to 16S ribosomal RNA. The protein is Small ribosomal subunit protein bS6 of Syntrophotalea carbinolica (strain DSM 2380 / NBRC 103641 / GraBd1) (Pelobacter carbinolicus).